We begin with the raw amino-acid sequence, 220 residues long: Type II restriction enzyme NspV (220 aa).

The enzyme catalyses Endonucleolytic cleavage of DNA to give specific double-stranded fragments with terminal 5'-phosphates.. Functionally, a P subtype restriction enzyme that recognizes the double-stranded sequence 5'-TTCGAA-3' and cleaves after T-2. The protein is Type II restriction enzyme NspV of Nostoc sp. (strain ATCC 29411 / PCC 7524).